Reading from the N-terminus, the 161-residue chain is S-protein homolog 2 (161 aa).

A signal peptide spans methionine 1–alanine 24. 3 N-linked (GlcNAc...) asparagine glycosylation sites follow: asparagine 75, asparagine 106, and asparagine 157.

The protein belongs to the plant self-incompatibility (S1) protein family.

It localises to the secreted. This Arabidopsis thaliana (Mouse-ear cress) protein is S-protein homolog 2.